The primary structure comprises 714 residues: Zinc finger matrin-type protein 1 (714 aa).

The segment at 89–119 (NFCKPCGVVLQHESERISHFESEIHAQNVKF) adopts a Matrin-type 1 zinc-finger fold. The segment at 172 to 214 (HYVGKSHSPTQNQSLEEHDQVSPSTCSPKMDEPNTTPAPPPFL) is disordered. A Matrin-type 2 zinc finger spans residues 230-254 (YVCHICSITFTSLHMFRSHMQGTEH). Residues 417 to 434 (RERVDSEHRQRPCEERFS) are compositionally biased toward basic and acidic residues. 2 disordered regions span residues 417-469 (RERV…NDDF) and 571-714 (MPAS…ILGF). Composition is skewed to polar residues over residues 437-446 (APQTYQQEYS) and 575-588 (LSLS…SSYN). The span at 609–619 (SHRRRRQKRKR) shows a compositional bias: basic residues. 2 stretches are compositionally biased toward basic and acidic residues: residues 620–632 (HLEE…EKEQ) and 640–662 (SYQD…EDKA). Over residues 669-678 (TKHRRKKRKH) the composition is skewed to basic residues.

The protein localises to the nucleus. The chain is Zinc finger matrin-type protein 1 (Zmat1) from Mus musculus (Mouse).